A 352-amino-acid polypeptide reads, in one-letter code: Putative pectinesterase 11 (352 aa).

The helical transmembrane segment at alanine 13 to alanine 35 threads the bilayer. Asparagine 76 carries an N-linked (GlcNAc...) asparagine glycan. Residue aspartate 175 is the Proton donor of the active site. The active-site Nucleophile is aspartate 196. Asparagine 218 carries an N-linked (GlcNAc...) asparagine glycan. Residues arginine 252 and tryptophan 254 each contribute to the substrate site. Residues leucine 332 to asparagine 352 are disordered. Polar residues predominate over residues proline 343–asparagine 352.

The protein belongs to the pectinesterase family.

The protein resides in the membrane. It carries out the reaction [(1-&gt;4)-alpha-D-galacturonosyl methyl ester](n) + n H2O = [(1-&gt;4)-alpha-D-galacturonosyl](n) + n methanol + n H(+). The protein operates within glycan metabolism; pectin degradation; 2-dehydro-3-deoxy-D-gluconate from pectin: step 1/5. Acts in the modification of cell walls via demethylesterification of cell wall pectin. This Arabidopsis thaliana (Mouse-ear cress) protein is Putative pectinesterase 11 (PME11).